Consider the following 209-residue polypeptide: Uracil phosphoribosyltransferase (209 aa).

Residues Arg79, Arg104, and 131–139 (DPMLATGGS) contribute to the 5-phospho-alpha-D-ribose 1-diphosphate site. Uracil is bound by residues Ile194 and 199–201 (GDA). Asp200 contributes to the 5-phospho-alpha-D-ribose 1-diphosphate binding site.

Belongs to the UPRTase family. Mg(2+) is required as a cofactor.

The catalysed reaction is UMP + diphosphate = 5-phospho-alpha-D-ribose 1-diphosphate + uracil. Its pathway is pyrimidine metabolism; UMP biosynthesis via salvage pathway; UMP from uracil: step 1/1. Allosterically activated by GTP. Functionally, catalyzes the conversion of uracil and 5-phospho-alpha-D-ribose 1-diphosphate (PRPP) to UMP and diphosphate. The polypeptide is Uracil phosphoribosyltransferase (Streptococcus sanguinis (strain SK36)).